A 187-amino-acid polypeptide reads, in one-letter code: RNA 2',3'-cyclic phosphodiesterase (187 aa).

Histidine 40 (proton donor) is an active-site residue. 2 consecutive short sequence motifs (HXTX) follow at residues 40–43 (HLTL) and 125–128 (HITI). Histidine 125 (proton acceptor) is an active-site residue.

Belongs to the 2H phosphoesterase superfamily. ThpR family.

The catalysed reaction is a 3'-end 2',3'-cyclophospho-ribonucleotide-RNA + H2O = a 3'-end 2'-phospho-ribonucleotide-RNA + H(+). Its function is as follows. Hydrolyzes RNA 2',3'-cyclic phosphodiester to an RNA 2'-phosphomonoester. This is RNA 2',3'-cyclic phosphodiesterase from Thermotoga maritima (strain ATCC 43589 / DSM 3109 / JCM 10099 / NBRC 100826 / MSB8).